We begin with the raw amino-acid sequence, 131 residues long: Small ribosomal subunit protein uS8 (131 aa).

This sequence belongs to the universal ribosomal protein uS8 family. As to quaternary structure, part of the 30S ribosomal subunit. Contacts proteins S5 and S12.

Functionally, one of the primary rRNA binding proteins, it binds directly to 16S rRNA central domain where it helps coordinate assembly of the platform of the 30S subunit. The protein is Small ribosomal subunit protein uS8 of Ruthia magnifica subsp. Calyptogena magnifica.